Reading from the N-terminus, the 176-residue chain is MLQFLNRCSKGRGAWLLMALTALVLELVALYFQHVMLLQPCVMCIYERAALFGILGASLLGAIAPKSPLRYLAIFIWIYSAWKGVQLAWTHTMLQLHPSPFTTCDFFVSFPSWLPLDKWFPAVFVASGDCAVKQWEFLSLEMPQWLVGIFAAYLFIAILVLISQFVKPKRRDLFSR.

Topologically, residues 1–14 are cytoplasmic; it reads MLQFLNRCSKGRGA. Residues 15–31 traverse the membrane as a helical segment; that stretch reads WLLMALTALVLELVALY. Residues 32 to 49 lie on the Periplasmic side of the membrane; sequence FQHVMLLQPCVMCIYERA. Cysteine 41 and cysteine 44 form a disulfide bridge. A helical membrane pass occupies residues 50–65; sequence ALFGILGASLLGAIAP. Residues 66 to 71 lie on the Cytoplasmic side of the membrane; sequence KSPLRY. A helical membrane pass occupies residues 72–89; it reads LAIFIWIYSAWKGVQLAW. The Periplasmic portion of the chain corresponds to 90 to 144; the sequence is THTMLQLHPSPFTTCDFFVSFPSWLPLDKWFPAVFVASGDCAVKQWEFLSLEMPQ. Cysteine 104 and cysteine 130 form a disulfide bridge. A helical membrane pass occupies residues 145-163; sequence WLVGIFAAYLFIAILVLIS. The Cytoplasmic portion of the chain corresponds to 164 to 176; it reads QFVKPKRRDLFSR.

It belongs to the DsbB family.

The protein localises to the cell inner membrane. Functionally, required for disulfide bond formation in some periplasmic proteins. Acts by oxidizing the DsbA protein. The sequence is that of Disulfide bond formation protein B from Yersinia enterocolitica serotype O:8 / biotype 1B (strain NCTC 13174 / 8081).